Reading from the N-terminus, the 570-residue chain is L-ascorbate oxidase (570 aa).

The N-terminal stretch at Met-1–Ala-18 is a signal peptide. Plastocyanin-like domains are found at residues Trp-33 to Val-140 and Phe-154 to Val-317. 3 disulfide bridges follow: Cys-36-Cys-219, Cys-98-Cys-557, and Cys-197-Cys-211. Residues His-77 and His-79 each contribute to the Cu cation site. Asn-109 carries N-linked (GlcNAc...) asparagine glycosylation. Cu cation contacts are provided by His-121 and His-123. N-linked (GlcNAc...) asparagine glycosylation occurs at Asn-196. N-linked (GlcNAc...) asparagine glycans are attached at residues Asn-229, Asn-343, Asn-384, Asn-407, Asn-434, Asn-442, and Asn-458. A Plastocyanin-like 3 domain is found at Arg-426 to Gly-543. Cu cation is bound by residues His-463, His-466, His-468, His-525, Cys-526, His-527, His-531, and Met-536.

Belongs to the multicopper oxidase family. Dimer. Cu cation serves as cofactor.

It localises to the secreted. The catalysed reaction is 4 L-ascorbate + O2 = 4 monodehydro-L-ascorbate radical + 2 H2O. The protein operates within cofactor degradation; L-ascorbate degradation. In terms of biological role, ascorbate oxidase involved in a redox system involving ascorbic acid (AsA). The oxidation of AsA represses responses to high salinity and oxidative stress conditions such as vegetative growth and seed production reductions. Negative regulator of defense responses toward incompatible Turnip mosaic virus (TuMV strain UK1) by preventing jasmonic acid (JA)- dependent accumulation of ascorbic acid (AsA, AS) and dehydroascobic acid (DHA). This chain is L-ascorbate oxidase, found in Brassica rapa subsp. pekinensis (Chinese cabbage).